The chain runs to 311 residues: Formimidoylglutamase (311 aa).

H130, D155, H157, D159, C242, and D244 together coordinate Mn(2+).

This sequence belongs to the arginase family. Mn(2+) serves as cofactor.

The enzyme catalyses N-formimidoyl-L-glutamate + H2O = formamide + L-glutamate. It functions in the pathway amino-acid degradation; L-histidine degradation into L-glutamate; L-glutamate from N-formimidoyl-L-glutamate (hydrolase route): step 1/1. Its function is as follows. Catalyzes the conversion of N-formimidoyl-L-glutamate to L-glutamate and formamide. The sequence is that of Formimidoylglutamase from Staphylococcus haemolyticus (strain JCSC1435).